The chain runs to 78 residues: Short neurotoxin SNTX6 (78 aa).

The first 21 residues, 1-21 (MKTLLLTFLVVTIVCLDLGYT), serve as a signal peptide directing secretion. 4 disulfide bridges follow: Cys24-Cys40, Cys33-Cys58, Cys62-Cys70, and Cys71-Cys76.

This sequence belongs to the three-finger toxin family. Short-chain subfamily. As to expression, expressed by the venom gland.

Its subcellular location is the secreted. Its function is as follows. This three-finger toxin binds and inhibits the nicotinic acetylcholine receptor (nAChR). In Ophiophagus hannah (King cobra), this protein is Short neurotoxin SNTX6.